The following is a 252-amino-acid chain: tRNA (guanine-N(1)-)-methyltransferase (252 aa).

S-adenosyl-L-methionine contacts are provided by residues glycine 113 and 133 to 138 (IGDYVL).

Belongs to the RNA methyltransferase TrmD family. In terms of assembly, homodimer.

It is found in the cytoplasm. It carries out the reaction guanosine(37) in tRNA + S-adenosyl-L-methionine = N(1)-methylguanosine(37) in tRNA + S-adenosyl-L-homocysteine + H(+). Its function is as follows. Specifically methylates guanosine-37 in various tRNAs. The sequence is that of tRNA (guanine-N(1)-)-methyltransferase from Nitrosococcus oceani (strain ATCC 19707 / BCRC 17464 / JCM 30415 / NCIMB 11848 / C-107).